Consider the following 556-residue polypeptide: Butanoate--CoA ligase AAE1 (556 aa).

The short motif at 554-556 (SKL) is the Microbody targeting signal element.

This sequence belongs to the ATP-dependent AMP-binding enzyme family. As to expression, expressed in roots, leaves, stems, flowers and developing seeds.

It is found in the peroxisome. The catalysed reaction is butanoate + ATP + CoA = butanoyl-CoA + AMP + diphosphate. It carries out the reaction hexanoate + ATP + CoA = hexanoyl-CoA + AMP + diphosphate. It catalyses the reaction pentanoate + ATP + CoA = pentanoyl-CoA + AMP + diphosphate. The enzyme catalyses 4-methylpentanoate + ATP + CoA = 4-methylpentanoyl-CoA + AMP + diphosphate. Catalyzes the ligation of CoA on butanoate to produce butanoyl-CoA. Can also use hexanoate, pentanoate and 4-methylpentanoate as substrates with a lower efficiency. The protein is Butanoate--CoA ligase AAE1 of Arabidopsis thaliana (Mouse-ear cress).